The following is a 106-amino-acid chain: HIG1 domain family member 2A, mitochondrial (106 aa).

At Ala2 the chain carries N-acetylalanine. Residues 20–106 (VIEGLSPTVY…LAVTAMKSRP (87 aa)) enclose the HIG1 domain. A run of 2 helical transmembrane segments spans residues 47–67 (PVVP…LYSF) and 83–103 (IAAQ…TAMK). The Mitochondrial matrix portion of the chain corresponds to 104-106 (SRP).

Associates with cytochrome c oxidase (COX, complex IV); proposed complex component.

It localises to the mitochondrion membrane. The protein resides in the mitochondrion inner membrane. Its function is as follows. Proposed subunit of cytochrome c oxidase (COX, complex IV), which is the terminal component of the mitochondrial respiratory chain that catalyzes the reduction of oxygen to water. May be involved in cytochrome c oxidase activity. May play a role in the assembly of respiratory supercomplexes. This chain is HIG1 domain family member 2A, mitochondrial (HIGD2A), found in Homo sapiens (Human).